The sequence spans 603 residues: Isocitrate dehydrogenase kinase/phosphatase (603 aa).

ATP-binding positions include 327–333 (APGIKGL) and lysine 348. Residue aspartate 383 is part of the active site.

The protein belongs to the AceK family.

The protein resides in the cytoplasm. It catalyses the reaction L-seryl-[isocitrate dehydrogenase] + ATP = O-phospho-L-seryl-[isocitrate dehydrogenase] + ADP + H(+). In terms of biological role, bifunctional enzyme which can phosphorylate or dephosphorylate isocitrate dehydrogenase (IDH) on a specific serine residue. This is a regulatory mechanism which enables bacteria to bypass the Krebs cycle via the glyoxylate shunt in response to the source of carbon. When bacteria are grown on glucose, IDH is fully active and unphosphorylated, but when grown on acetate or ethanol, the activity of IDH declines drastically concomitant with its phosphorylation. The polypeptide is Isocitrate dehydrogenase kinase/phosphatase (Burkholderia mallei (strain ATCC 23344)).